A 333-amino-acid chain; its full sequence is Meiotic recombination protein rec24 (333 aa).

The protein belongs to the MEI4L family. As to quaternary structure, interacts with Rec7, as part of the meiotic recombination initiation complex.

It is found in the cytoplasm. Its subcellular location is the nucleus. Functionally, required for correct meiotic chromosome segregation and recombination. Accessory protein required for Rec12 activity, which is involved in formation of the double-strand breaks (DSBs) that initiate meiotic recombination. The protein is Meiotic recombination protein rec24 (rec24) of Schizosaccharomyces pombe (strain 972 / ATCC 24843) (Fission yeast).